We begin with the raw amino-acid sequence, 201 residues long: MDPAASPAAAPPAAPAAAPAADPAADPAAALPGQALAQAPALAQINGQEGARNERAAYLWRPWLSSINDQPRQARSLVDWADNRATAAEAAKTDSDFHHPVRLYWPKSHSFDYLYSAGEILLNNFPVQATINLYEDSDSADNEEDKEEEEEEEEEEDDEEEEEDEDKDVNENEPEVCMGVSEATTHKATAHSPDPHSACPN.

Residues M1–A29 are disordered. Residues P15–A29 are compositionally biased toward low complexity. A WRPW motif motif is present at residues A57–W60. Residues H99–Y134 form a ripply homology domain region. A compositionally biased stretch (acidic residues) spans D136–P174. Residues D136–N201 form a disordered region.

This sequence belongs to the ripply family. As to expression, expressed in the anterior presomitic mesoderm and somites of stage E9.5 dpc embryos. Also expressed in tongue, diaphragm and intercostal muscles at 16.5 dpc.

Its subcellular location is the nucleus. Its function is as follows. Plays a role in somitogenesis. Essential for transcriptional repression of the segmental patterning genes, thus terminating the segmentation program in the presomitic mesoderm, and also required for the maintenance of rostrocaudal polarity in somites. The protein is Protein ripply1 of Mus musculus (Mouse).